A 759-amino-acid chain; its full sequence is Protein YdeP (759 aa).

2 residues coordinate [4Fe-4S] cluster: Cys-49 and Cys-52.

Belongs to the prokaryotic molybdopterin-containing oxidoreductase family. [4Fe-4S] cluster is required as a cofactor. The cofactor is Mo-bis(molybdopterin guanine dinucleotide).

Probably involved in acid resistance. This chain is Protein YdeP (ydeP), found in Escherichia coli (strain K12).